The sequence spans 413 residues: Terephthalate 1,2-dioxygenase, terminal oxygenase component subunit alpha 2 (413 aa).

The Rieske domain maps to asparagine 41 to leucine 144. 4 residues coordinate [2Fe-2S] cluster: cysteine 82, histidine 84, cysteine 102, and histidine 105.

The protein belongs to the bacterial ring-hydroxylating dioxygenase alpha subunit family. In terms of assembly, heterotetramer composed of 2 alpha (TphA2I and TphA2II) and 2 beta (TphA3I and TphA3II) subunits. Part of a multicomponent enzyme system composed of a reductase (TphA1I or TphA1II) and a two-subunit oxygenase component (TphA2I or TphA2II and TphA3I or TphA3II). Requires Fe cation as cofactor. It depends on [2Fe-2S] cluster as a cofactor.

It carries out the reaction terephthalate + NADH + O2 + H(+) = (3S,4R)-3,4-dihydroxycyclohexa-1,5-diene-1,4-dicarboxylate + NAD(+). With respect to regulation, inhibited by EDTA. In terms of biological role, component of the terephthalate 1,2-dioxygenase multicomponent enzyme system which catalyzes the dioxygenation of terephthalate (TER/TPA) to 1,2-dihydroxy-3,5-cyclohexadiene-1,4-dicarboxylic acid (DCD). It can also use 2,5-dicarboxypyridine (PDC) and 1,4-napthalenedicarboxylic acid (NDC) as substrates, and preferentially uses NADPH which is the physiological electron donor. The protein is Terephthalate 1,2-dioxygenase, terminal oxygenase component subunit alpha 2 (tphA2II) of Comamonas sp.